A 79-amino-acid chain; its full sequence is ATP synthase subunit c (79 aa).

2 consecutive transmembrane segments (helical) span residues M11–L31 and F53–Y73.

This sequence belongs to the ATPase C chain family. As to quaternary structure, F-type ATPases have 2 components, F(1) - the catalytic core - and F(0) - the membrane proton channel. F(1) has five subunits: alpha(3), beta(3), gamma(1), delta(1), epsilon(1). F(0) has three main subunits: a(1), b(2) and c(10-14). The alpha and beta chains form an alternating ring which encloses part of the gamma chain. F(1) is attached to F(0) by a central stalk formed by the gamma and epsilon chains, while a peripheral stalk is formed by the delta and b chains.

Its subcellular location is the cell inner membrane. Its function is as follows. F(1)F(0) ATP synthase produces ATP from ADP in the presence of a proton or sodium gradient. F-type ATPases consist of two structural domains, F(1) containing the extramembraneous catalytic core and F(0) containing the membrane proton channel, linked together by a central stalk and a peripheral stalk. During catalysis, ATP synthesis in the catalytic domain of F(1) is coupled via a rotary mechanism of the central stalk subunits to proton translocation. In terms of biological role, key component of the F(0) channel; it plays a direct role in translocation across the membrane. A homomeric c-ring of between 10-14 subunits forms the central stalk rotor element with the F(1) delta and epsilon subunits. This chain is ATP synthase subunit c, found in Proteus mirabilis (strain HI4320).